The chain runs to 384 residues: S-adenosylmethionine synthase (384 aa).

Histidine 15 contributes to the ATP binding site. Residue aspartate 17 participates in Mg(2+) binding. A K(+)-binding site is contributed by glutamate 43. Residues glutamate 56 and glutamine 99 each coordinate L-methionine. The interval 99-109 is flexible loop; that stretch reads QSPDINQGVDR. ATP is bound by residues 164–166, 231–232, aspartate 240, 246–247, alanine 263, and lysine 267; these read DAK, RF, and RK. Aspartate 240 provides a ligand contact to L-methionine. Lysine 271 contacts L-methionine.

The protein belongs to the AdoMet synthase family. Homotetramer; dimer of dimers. Mg(2+) serves as cofactor. It depends on K(+) as a cofactor.

It is found in the cytoplasm. It carries out the reaction L-methionine + ATP + H2O = S-adenosyl-L-methionine + phosphate + diphosphate. It participates in amino-acid biosynthesis; S-adenosyl-L-methionine biosynthesis; S-adenosyl-L-methionine from L-methionine: step 1/1. Its function is as follows. Catalyzes the formation of S-adenosylmethionine (AdoMet) from methionine and ATP. The overall synthetic reaction is composed of two sequential steps, AdoMet formation and the subsequent tripolyphosphate hydrolysis which occurs prior to release of AdoMet from the enzyme. This is S-adenosylmethionine synthase from Shewanella piezotolerans (strain WP3 / JCM 13877).